Here is a 366-residue protein sequence, read N- to C-terminus: Outer membrane porin C 2 (366 aa).

The first 21 residues, 1–21, serve as a signal peptide directing secretion; the sequence is MKLKIVAVVVTGLLAANVAHA.

It belongs to the Gram-negative porin family. As to quaternary structure, homotrimer. Forms mixed heterotrimers with OmpF and with PhoE; other mixed heterotrimers are also probable.

The protein resides in the cell outer membrane. Forms pores that allow passive diffusion of small molecules across the outer membrane. Plays a role in virulence. The protein is Outer membrane porin C 2 of Shigella flexneri serotype 5a (strain M90T).